We begin with the raw amino-acid sequence, 222 residues long: Protein-L-isoaspartate O-methyltransferase (222 aa).

Serine 69 is an active-site residue.

The protein belongs to the methyltransferase superfamily. L-isoaspartyl/D-aspartyl protein methyltransferase family.

It is found in the cytoplasm. The enzyme catalyses [protein]-L-isoaspartate + S-adenosyl-L-methionine = [protein]-L-isoaspartate alpha-methyl ester + S-adenosyl-L-homocysteine. Its function is as follows. Catalyzes the methyl esterification of L-isoaspartyl residues in peptides and proteins that result from spontaneous decomposition of normal L-aspartyl and L-asparaginyl residues. It plays a role in the repair and/or degradation of damaged proteins. The sequence is that of Protein-L-isoaspartate O-methyltransferase from Nitrosomonas eutropha (strain DSM 101675 / C91 / Nm57).